Reading from the N-terminus, the 208-residue chain is Glycerol-3-phosphate acyltransferase (208 aa).

The next 5 helical transmembrane spans lie at Leu-4 to Ile-24, Val-56 to Leu-76, Pro-80 to Phe-100, Pro-117 to Phe-137, and Tyr-139 to Lys-159.

Belongs to the PlsY family. Probably interacts with PlsX.

The protein localises to the cell inner membrane. The enzyme catalyses an acyl phosphate + sn-glycerol 3-phosphate = a 1-acyl-sn-glycero-3-phosphate + phosphate. The protein operates within lipid metabolism; phospholipid metabolism. Its function is as follows. Catalyzes the transfer of an acyl group from acyl-phosphate (acyl-PO(4)) to glycerol-3-phosphate (G3P) to form lysophosphatidic acid (LPA). This enzyme utilizes acyl-phosphate as fatty acyl donor, but not acyl-CoA or acyl-ACP. The chain is Glycerol-3-phosphate acyltransferase from Vibrio cholerae serotype O1 (strain ATCC 39541 / Classical Ogawa 395 / O395).